We begin with the raw amino-acid sequence, 144 residues long: Gonadotropin subunit beta-2 (144 aa).

The first 27 residues, 1–27, serve as a signal peptide directing secretion; sequence MGTPVKILVVRNHILFSVVVLLAVAQS. Disulfide bonds link Cys-33/Cys-81, Cys-47/Cys-96, Cys-50/Cys-134, Cys-58/Cys-112, Cys-62/Cys-114, and Cys-117/Cys-124. The N-linked (GlcNAc...) asparagine glycan is linked to Asn-37. A propeptide spanning residues 143–144 is cleaved from the precursor; the sequence is VY.

This sequence belongs to the glycoprotein hormones subunit beta family. Heterodimer of an alpha and a beta chain.

Its subcellular location is the secreted. Its function is as follows. Involved in gametogenesis and steroidogenesis. This is Gonadotropin subunit beta-2 (cgbb) from Cyprinus carpio (Common carp).